We begin with the raw amino-acid sequence, 450 residues long: Bifunctional protein GlmU (450 aa).

The tract at residues 1–229 is pyrophosphorylase; sequence MRRHAIILAA…VEEIMGVNDR (229 aa). UDP-N-acetyl-alpha-D-glucosamine-binding positions include 8–11, Lys22, Gln72, and 77–78; these read LAAG and GT. Position 102 (Asp102) interacts with Mg(2+). UDP-N-acetyl-alpha-D-glucosamine contacts are provided by Gly139, Glu154, and Asn227. Asn227 serves as a coordination point for Mg(2+). The linker stretch occupies residues 230–250; that stretch reads VMLSQAEKAMQRRTNHYHMLN. The segment at 251 to 450 is N-acetyltransferase; it reads GVTIIDPDST…RQTTKEGYRK (200 aa). Residues Arg332 and Lys350 each coordinate UDP-N-acetyl-alpha-D-glucosamine. His362 functions as the Proton acceptor in the catalytic mechanism. Tyr365 and Asn376 together coordinate UDP-N-acetyl-alpha-D-glucosamine. Acetyl-CoA is bound by residues 385–386, Ala422, and Arg439; that span reads NY.

In the N-terminal section; belongs to the N-acetylglucosamine-1-phosphate uridyltransferase family. It in the C-terminal section; belongs to the transferase hexapeptide repeat family. In terms of assembly, homotrimer. It depends on Mg(2+) as a cofactor.

It localises to the cytoplasm. It catalyses the reaction alpha-D-glucosamine 1-phosphate + acetyl-CoA = N-acetyl-alpha-D-glucosamine 1-phosphate + CoA + H(+). It carries out the reaction N-acetyl-alpha-D-glucosamine 1-phosphate + UTP + H(+) = UDP-N-acetyl-alpha-D-glucosamine + diphosphate. It functions in the pathway nucleotide-sugar biosynthesis; UDP-N-acetyl-alpha-D-glucosamine biosynthesis; N-acetyl-alpha-D-glucosamine 1-phosphate from alpha-D-glucosamine 6-phosphate (route II): step 2/2. Its pathway is nucleotide-sugar biosynthesis; UDP-N-acetyl-alpha-D-glucosamine biosynthesis; UDP-N-acetyl-alpha-D-glucosamine from N-acetyl-alpha-D-glucosamine 1-phosphate: step 1/1. The protein operates within bacterial outer membrane biogenesis; LPS lipid A biosynthesis. Catalyzes the last two sequential reactions in the de novo biosynthetic pathway for UDP-N-acetylglucosamine (UDP-GlcNAc). The C-terminal domain catalyzes the transfer of acetyl group from acetyl coenzyme A to glucosamine-1-phosphate (GlcN-1-P) to produce N-acetylglucosamine-1-phosphate (GlcNAc-1-P), which is converted into UDP-GlcNAc by the transfer of uridine 5-monophosphate (from uridine 5-triphosphate), a reaction catalyzed by the N-terminal domain. The polypeptide is Bifunctional protein GlmU (Staphylococcus aureus (strain USA300)).